A 206-amino-acid chain; its full sequence is High frequency lysogenization protein HflD homolog (206 aa).

Belongs to the HflD family.

The protein resides in the cytoplasm. Its subcellular location is the cell inner membrane. The sequence is that of High frequency lysogenization protein HflD homolog from Pseudomonas savastanoi pv. phaseolicola (strain 1448A / Race 6) (Pseudomonas syringae pv. phaseolicola (strain 1448A / Race 6)).